A 183-amino-acid polypeptide reads, in one-letter code: dCTP deaminase (183 aa).

DCTP is bound by residues 97 to 102 (RSSFAR) and D113. The active-site Proton donor/acceptor is E123. Positions 155 and 162 each coordinate dCTP.

The protein belongs to the dCTP deaminase family. Homotrimer.

It carries out the reaction dCTP + H2O + H(+) = dUTP + NH4(+). It functions in the pathway pyrimidine metabolism; dUMP biosynthesis; dUMP from dCTP (dUTP route): step 1/2. Its function is as follows. Catalyzes the deamination of dCTP to dUTP. This is dCTP deaminase from Sulfurisphaera tokodaii (strain DSM 16993 / JCM 10545 / NBRC 100140 / 7) (Sulfolobus tokodaii).